Consider the following 425-residue polypeptide: Serine--tRNA ligase (425 aa).

Position 233–235 (233–235 (TAE)) interacts with L-serine. 264–266 (RAE) contributes to the ATP binding site. Glutamate 287 provides a ligand contact to L-serine. 351-354 (EISS) contacts ATP. Residue serine 387 participates in L-serine binding.

The protein belongs to the class-II aminoacyl-tRNA synthetase family. Type-1 seryl-tRNA synthetase subfamily. In terms of assembly, homodimer. The tRNA molecule binds across the dimer.

The protein resides in the cytoplasm. The enzyme catalyses tRNA(Ser) + L-serine + ATP = L-seryl-tRNA(Ser) + AMP + diphosphate + H(+). It catalyses the reaction tRNA(Sec) + L-serine + ATP = L-seryl-tRNA(Sec) + AMP + diphosphate + H(+). Its pathway is aminoacyl-tRNA biosynthesis; selenocysteinyl-tRNA(Sec) biosynthesis; L-seryl-tRNA(Sec) from L-serine and tRNA(Sec): step 1/1. Catalyzes the attachment of serine to tRNA(Ser). Is also able to aminoacylate tRNA(Sec) with serine, to form the misacylated tRNA L-seryl-tRNA(Sec), which will be further converted into selenocysteinyl-tRNA(Sec). This is Serine--tRNA ligase from Clostridium perfringens (strain ATCC 13124 / DSM 756 / JCM 1290 / NCIMB 6125 / NCTC 8237 / Type A).